We begin with the raw amino-acid sequence, 271 residues long: Tryptophan synthase alpha chain (271 aa).

Residues Glu53 and Asp64 each act as proton acceptor in the active site.

It belongs to the TrpA family. As to quaternary structure, tetramer of two alpha and two beta chains.

It catalyses the reaction (1S,2R)-1-C-(indol-3-yl)glycerol 3-phosphate + L-serine = D-glyceraldehyde 3-phosphate + L-tryptophan + H2O. It functions in the pathway amino-acid biosynthesis; L-tryptophan biosynthesis; L-tryptophan from chorismate: step 5/5. In terms of biological role, the alpha subunit is responsible for the aldol cleavage of indoleglycerol phosphate to indole and glyceraldehyde 3-phosphate. This chain is Tryptophan synthase alpha chain, found in Streptomyces coelicolor (strain ATCC BAA-471 / A3(2) / M145).